The chain runs to 189 residues: L-2,4-diaminobutyric acid acetyltransferase (189 aa).

The 152-residue stretch at 32–183 (ITIGKPTVED…DDHEAELTFR (152 aa)) folds into the N-acetyltransferase domain.

The protein belongs to the acetyltransferase family. EctA subfamily.

It catalyses the reaction L-2,4-diaminobutanoate + acetyl-CoA = (2S)-4-acetamido-2-aminobutanoate + CoA + H(+). It participates in amine and polyamine biosynthesis; ectoine biosynthesis; L-ectoine from L-aspartate 4-semialdehyde: step 2/3. Its function is as follows. Catalyzes the acetylation of L-2,4-diaminobutyrate (DABA) to gamma-N-acetyl-alpha,gamma-diaminobutyric acid (ADABA) with acetyl coenzyme A. The polypeptide is L-2,4-diaminobutyric acid acetyltransferase (ectA) (Halalkalibacterium halodurans (strain ATCC BAA-125 / DSM 18197 / FERM 7344 / JCM 9153 / C-125) (Bacillus halodurans)).